Reading from the N-terminus, the 1203-residue chain is MPKSGAHQPLVRHDTDDGGETGQSVKSLADVSEEEIDSRMSRRSSVIADLLSLFRRSSSVLVRPHTRLGNPNFDDDDDEFDEEDDKEASKDRILKKIQQKKEIIQKLRGQPWYMKRKRRTLKVAQKHLQQQEAKVSKARLYKAEAGRRLTQASRWLDNLKIYLIPWEAKIRKIESHFGSVVSSYFTFHRWVLGVNITITFIMCMFVVIPEWLADSRTQFGDDRYNKTKAIKVMPPAVRARADELSTVWDFGGYFQYSLLFYGFYSKETFFGETIKYRVPVAYFFCNIFILGFSLFIILRKMAANNRRGTLSSGKTQQYLFNWKAFTGWDYTIGNPETAGNVYMANVIKFREAINDDKQKPSDKHPWIRFVARVLTNLFICAMYVFSIWAIMQCGTLKGEHFFAQNATAITISLITLVFPNIFDLLGKIEKLHPRNALRFQLGRVLVLYILNYYTLIYSLMLQLEHLQKEKNASDNPISALGHPGDAIGRTIRETVLPRYPVDNNPHTYYSYAPVTTTPIPATSSWTTVLPDFGPFGVYNPKASVTKDDTVFSSPVVETHMFGPNSDWNETTVNAASPTGATTRASLRMSQGGLCWETIIGQEITKLVTMDLYMTVASIFLIDFLRGLACRYLNLYWPWDLERTFPEYGEFKVAENVLHLVNNQGMIWLGLFFVPLLPMLNNIKLIILMYIRGWAAMTCNVPASQIFRASRSSNFFFALLILFLFLCTLPVGFVIASKTPSKSCGPFGNQSFFYSVITDVLHENLDKTLVNGIKYSLSPGIIIPVLVLLSLVIYFLIAMVTGLSQANQDLSFQLMVERTEEKKKIFELAGGKKKKSKDNTFGKQKPKQLLPPPTKGVSSDDDSQHNRSTAKSVSGRQFVPSLGSVSEVDHSTGEEQSSDSESTTSSLPPKLSLRQRFLVCIGWADPNKYGRHDDIEMEEGGGRLRELSTGSETDSDDEDSEKSNRDMSYRTAIQSFDQNSQSASASSSKSTTTAPSNSEMRIEITENPLHTYITPLRIEKKSSASSSSSSHQPSSSIEKQAARRLLQPISTTHNIRYGVATVENSSQDPTRPPSTDDSLGDPALHEPLWANLNPHSSYTSAMMSPIMNEVMSNDETTDDEKGRLIPDRPPIPHSPRELKRLKREKDQQSESGSKPSTPRPPRFRISMSPPRKPPSEKNDSDSSNRKYEMRVEKSPKKPKKSDND.

2 disordered regions span residues 1-39 (MPKS…IDSR) and 64-90 (PHTR…EASK). The span at 73–86 (FDDDDDEFDEEDDK) shows a compositional bias: acidic residues. A helical transmembrane segment spans residues 191-213 (VLGVNITITFIMCMFVVIPEWLA). N-linked (GlcNAc...) asparagine glycosylation occurs at Asn-225. A run of 6 helical transmembrane segments spans residues 276–298 (YRVP…FIIL), 369–391 (FVAR…WAIM), 406–428 (ATAI…LGKI), 441–463 (LGRV…MLQL), 665–687 (MIWL…LIIL), and 714–736 (FFFA…VIAS). Residue Asn-748 is glycosylated (N-linked (GlcNAc...) asparagine). The chain crosses the membrane as a helical span at residues 780–802 (IIIPVLVLLSLVIYFLIAMVTGL). Disordered stretches follow at residues 826–908 (ELAG…SLPP), 927–1039 (KYGR…IEKQ), 1059–1087 (ATVE…HEPL), and 1112–1203 (NDET…SDND). The span at 865-874 (NRSTAKSVSG) shows a compositional bias: polar residues. Low complexity predominate over residues 898–908 (DSESTTSSLPP). Positions 927-945 (KYGRHDDIEMEEGGGRLRE) are enriched in basic and acidic residues. Low complexity-rich tracts occupy residues 973-997 (QSFD…PSNS) and 1022-1035 (SASS…PSSS). Positions 1061 to 1076 (VENSSQDPTRPPSTDD) are enriched in polar residues. Basic and acidic residues-rich tracts occupy residues 1133–1147 (SPRE…KDQQ) and 1172–1203 (PPSE…SDND).

This sequence belongs to the TMC family.

The protein localises to the membrane. Functionally, probable ion channel. The sequence is that of Transmembrane channel-like protein 2 (tmc-2) from Caenorhabditis elegans.